A 393-amino-acid polypeptide reads, in one-letter code: Sulfate adenylyltransferase (393 aa).

Belongs to the sulfate adenylyltransferase family.

The enzyme catalyses sulfate + ATP + H(+) = adenosine 5'-phosphosulfate + diphosphate. Its pathway is sulfur metabolism; hydrogen sulfide biosynthesis; sulfite from sulfate: step 1/3. The protein is Sulfate adenylyltransferase of Synechococcus sp. (strain JA-3-3Ab) (Cyanobacteria bacterium Yellowstone A-Prime).